The sequence spans 376 residues: MTAIYIGVMTGTSMDGVDFVAASFDPLHIHATLTLPFEPALRDELMALTLPGDNEIDRMGKADVGLAKLIGHGINMLIEQNHLDRHVIKAIGSHGQTIRHRPEHGFTLQIGDPHIITELTGIPVISDFRRRDMAAGGQGAPLVPAFHQAIFQHSTIHRVILNLGGIANVSLLPAGNPDGVYGFDTGPANILMDAWCERYTGHPYDENGNWAAYGQPIRALLERLQAHEFFSKKPPKSTGREDFNLDWLDDQLADWRNDELEYDELEDTPENVQATLLKLTTRAIKKAIYRSELDTGEVYVCGGGAYNSHLLEQLRWRLRKHHWSVQSTSVLGLSPTWVEATAFAWLAMRFMQQQSANLPSVTGAAGFRILGTITSV.

An ATP-binding site is contributed by 11–18 (GTSMDGVD).

This sequence belongs to the anhydro-N-acetylmuramic acid kinase family.

It carries out the reaction 1,6-anhydro-N-acetyl-beta-muramate + ATP + H2O = N-acetyl-D-muramate 6-phosphate + ADP + H(+). It functions in the pathway amino-sugar metabolism; 1,6-anhydro-N-acetylmuramate degradation. Its pathway is cell wall biogenesis; peptidoglycan recycling. Catalyzes the specific phosphorylation of 1,6-anhydro-N-acetylmuramic acid (anhMurNAc) with the simultaneous cleavage of the 1,6-anhydro ring, generating MurNAc-6-P. Is required for the utilization of anhMurNAc either imported from the medium or derived from its own cell wall murein, and thus plays a role in cell wall recycling. The protein is Anhydro-N-acetylmuramic acid kinase of Acinetobacter baylyi (strain ATCC 33305 / BD413 / ADP1).